The chain runs to 339 residues: MDFQTLHQLSKTELHCHLDGSLSLSCIRQLAKMIDRKLPATDDELRRLVQAPADSENLGDYLKAFDFVAPLLQTKKALQLAAYDVVEQAAEENVRYIEIRFAPVFSLAGGLSLVEATQAVIEGLHQGMATYDIMAKALVCGMRQLPNTDNQTMFKTTAPLLGSTLVGGDFAGNEADFPTNVCAPAIKTAQSLGVPLTFHAGECHCPQNIGEAVRLGIPRIGHATACFDQPALIEKIVETGTTVELCLTSNLQTKAARTLAEFPYQALKKAGAKITINTDNRTVSNTTLTQEYQRYQQAFGTTAADFLAFNLNAIDAAFIPDADKKSLRDQLHQDYATYC.

Zn(2+) is bound by residues His-15 and His-17. Residues His-17, Asp-19, and Gly-172 each coordinate substrate. His-199 contacts Zn(2+). The Proton donor role is filled by Glu-202. Asp-279 is a Zn(2+) binding site.

It belongs to the metallo-dependent hydrolases superfamily. Adenosine and AMP deaminases family. Adenosine deaminase subfamily. It depends on Zn(2+) as a cofactor.

It catalyses the reaction adenosine + H2O + H(+) = inosine + NH4(+). The catalysed reaction is 2'-deoxyadenosine + H2O + H(+) = 2'-deoxyinosine + NH4(+). Its function is as follows. Catalyzes the hydrolytic deamination of adenosine and 2-deoxyadenosine. This is Adenosine deaminase from Lacticaseibacillus paracasei (strain ATCC 334 / BCRC 17002 / CCUG 31169 / CIP 107868 / KCTC 3260 / NRRL B-441) (Lactobacillus paracasei).